The primary structure comprises 154 residues: Myoglobin (154 aa).

The Globin domain occupies 2–148 (GLSDGEWQLV…FRKDIAAKYK (147 aa)). At S4 the chain carries Phosphoserine. Nitrite is bound at residue H65. Residue H65 participates in O2 binding. Residue T68 is modified to Phosphothreonine. H94 is a binding site for heme b.

This sequence belongs to the globin family. In terms of assembly, monomeric.

It is found in the cytoplasm. The protein localises to the sarcoplasm. The enzyme catalyses Fe(III)-heme b-[protein] + nitric oxide + H2O = Fe(II)-heme b-[protein] + nitrite + 2 H(+). It carries out the reaction H2O2 + AH2 = A + 2 H2O. Its function is as follows. Monomeric heme protein which primary function is to store oxygen and facilitate its diffusion within muscle tissues. Reversibly binds oxygen through a pentacoordinated heme iron and enables its timely and efficient release as needed during periods of heightened demand. Depending on the oxidative conditions of tissues and cells, and in addition to its ability to bind oxygen, it also has a nitrite reductase activity whereby it regulates the production of bioactive nitric oxide. Under stress conditions, like hypoxia and anoxia, it also protects cells against reactive oxygen species thanks to its pseudoperoxidase activity. The polypeptide is Myoglobin (MB) (Globicephala melas (Long-finned pilot whale)).